Reading from the N-terminus, the 213-residue chain is Cytochrome c biogenesis ATP-binding export protein CcmA (213 aa).

Residues 3–211 (LTAENLGVRR…QMTGFAGVET (209 aa)) form the ABC transporter domain. 35 to 42 (GRNGSGKS) lines the ATP pocket.

Belongs to the ABC transporter superfamily. CcmA exporter (TC 3.A.1.107) family. In terms of assembly, the complex is composed of two ATP-binding proteins (CcmA) and two transmembrane proteins (CcmB).

It is found in the cell inner membrane. The enzyme catalyses heme b(in) + ATP + H2O = heme b(out) + ADP + phosphate + H(+). Functionally, part of the ABC transporter complex CcmAB involved in the biogenesis of c-type cytochromes; once thought to export heme, this seems not to be the case, but its exact role is uncertain. Responsible for energy coupling to the transport system. In Agrobacterium fabrum (strain C58 / ATCC 33970) (Agrobacterium tumefaciens (strain C58)), this protein is Cytochrome c biogenesis ATP-binding export protein CcmA.